Here is a 156-residue protein sequence, read N- to C-terminus: Toxin Res (156 aa).

The protein belongs to the MbcT/ParT/Res family. As to quaternary structure, homodimer. Forms a complex with cognate antitoxin Xre.

Functionally, toxic component of a type II toxin-antitoxin (TA) system. Expression in E.coli inhibits cell growth; bacteriostasis is neutralized by expression of cognate antitoxin Xre. Expression in E.coli leads to almost complete depletion of intracellular NAD(+): NAD(+) levels are partially restored when coexpressed with antitoxin Xre. This Photorhabdus laumondii subsp. laumondii (strain DSM 15139 / CIP 105565 / TT01) (Photorhabdus luminescens subsp. laumondii) protein is Toxin Res.